Consider the following 261-residue polypeptide: Small ribosomal subunit protein eS4z (261 aa).

The S4 RNA-binding domain occupies 42-104 (LPLVLIIRNR…TNENFRLLYD (63 aa)).

This sequence belongs to the eukaryotic ribosomal protein eS4 family.

It is found in the cytoplasm. The protein is Small ribosomal subunit protein eS4z (RPS4A) of Arabidopsis thaliana (Mouse-ear cress).